The following is a 273-amino-acid chain: Glutamate 5-kinase (273 aa).

An ATP-binding site is contributed by Lys15. The substrate site is built by Ser55, Asp142, and Asn158. Residues 178-179 (SD) and 220-226 (TGGMLSK) each bind ATP.

Belongs to the glutamate 5-kinase family.

The protein resides in the cytoplasm. The catalysed reaction is L-glutamate + ATP = L-glutamyl 5-phosphate + ADP. It participates in amino-acid biosynthesis; L-proline biosynthesis; L-glutamate 5-semialdehyde from L-glutamate: step 1/2. Functionally, catalyzes the transfer of a phosphate group to glutamate to form L-glutamate 5-phosphate. The polypeptide is Glutamate 5-kinase (Streptococcus pyogenes serotype M3 (strain ATCC BAA-595 / MGAS315)).